A 98-amino-acid polypeptide reads, in one-letter code: Integration host factor subunit alpha (98 aa).

The interval 49–71 (FGNFDLRDKNQRPGRNPKTGEDI) is disordered.

Belongs to the bacterial histone-like protein family. In terms of assembly, heterodimer of an alpha and a beta chain.

In terms of biological role, this protein is one of the two subunits of integration host factor, a specific DNA-binding protein that functions in genetic recombination as well as in transcriptional and translational control. The protein is Integration host factor subunit alpha of Shewanella halifaxensis (strain HAW-EB4).